Consider the following 476-residue polypeptide: Calcitonin gene-related peptide type 1 receptor (476 aa).

Residues 1-33 (METLQMGLLSRSALFKYIIIFLIMINTRGYVLA) form the signal peptide. Residues 34-154 (SQEQEAKTSV…FTHEKVKTAL (121 aa)) are Extracellular-facing. Intrachain disulfides connect Cys63/Cys89, Cys80/Cys120, and Cys103/Cys142. Asn81, Asn133, and Asn138 each carry an N-linked (GlcNAc...) asparagine glycan. Residues 155 to 179 (NLYYLTIIGHGLSIASLLISLGIFF) form a helical membrane-spanning segment. Topologically, residues 180–190 (YFKNLSCQRIT) are cytoplasmic. The chain crosses the membrane as a helical span at residues 191-213 (LHKNLFFSFVCNSIITIISLSAV). Residues 214-224 (ANNQALVATNP) lie on the Extracellular side of the membrane. Residues 225–253 (VICKISQFIHLYLMGCNYFWMLCEGIYLH) form a helical membrane-spanning segment. Over 254 to 267 (TLIVVAVFAEKQHL) the chain is Cytoplasmic. The helical transmembrane segment at 268–288 (MWYYLLGWGFPLIPACIHAVA) threads the bilayer. Topologically, residues 289–304 (RSLYYNDNCWISSETH) are extracellular. Residues 305–329 (LLYIIHGPICAALLVNLFFLLNIVR) form a helical membrane-spanning segment. The Cytoplasmic segment spans residues 330-344 (VLITKLKVTHQAESN). A helical transmembrane segment spans residues 345–366 (LYMKAVRATLILVPLLGIEFVL). Topologically, residues 367-381 (FPWKPEGRIAEEIYD) are extracellular. The helical transmembrane segment at 382-402 (YVMHILMHYQGLLVATIFCFF) threads the bilayer. Residues 403–476 (NGEVQAVLKR…VFFKTEKQYM (74 aa)) are Cytoplasmic-facing.

The protein belongs to the G-protein coupled receptor 2 family.

Its subcellular location is the cell membrane. Functionally, may function as G protein-coupled receptor for calcitonin-gene-related peptides and adrenomedullin. Specificity may be modulated by accessory proteins. May activate cAMP-dependent pathway. This Xenopus laevis (African clawed frog) protein is Calcitonin gene-related peptide type 1 receptor (calcrl).